A 155-amino-acid polypeptide reads, in one-letter code: Protein-export protein SecB (155 aa).

This sequence belongs to the SecB family. As to quaternary structure, homotetramer, a dimer of dimers. One homotetramer interacts with 1 SecA dimer.

The protein localises to the cytoplasm. Its function is as follows. One of the proteins required for the normal export of preproteins out of the cell cytoplasm. It is a molecular chaperone that binds to a subset of precursor proteins, maintaining them in a translocation-competent state. It also specifically binds to its receptor SecA. This is Protein-export protein SecB from Salmonella heidelberg (strain SL476).